Consider the following 272-residue polypeptide: Acetylglutamate kinase (272 aa).

Substrate contacts are provided by residues 46-47 (GA), arginine 68, and asparagine 166.

The protein belongs to the acetylglutamate kinase family. ArgB subfamily.

It is found in the cytoplasm. It catalyses the reaction N-acetyl-L-glutamate + ATP = N-acetyl-L-glutamyl 5-phosphate + ADP. It functions in the pathway amino-acid biosynthesis; L-arginine biosynthesis; N(2)-acetyl-L-ornithine from L-glutamate: step 2/4. In terms of biological role, catalyzes the ATP-dependent phosphorylation of N-acetyl-L-glutamate. This is Acetylglutamate kinase from Dehalococcoides mccartyi (strain ATCC BAA-2100 / JCM 16839 / KCTC 5957 / BAV1).